The chain runs to 126 residues: Nascent polypeptide-associated complex protein (126 aa).

Residues 10–77 (PRMMKQMQKM…AKKVAKAEEK (68 aa)) form the NAC-A/B domain.

It belongs to the NAC-alpha family. As to quaternary structure, homodimer. Interacts with the ribosome. Binds ribosomal RNA.

Contacts the emerging nascent chain on the ribosome. This Methanococcus maripaludis (strain C6 / ATCC BAA-1332) protein is Nascent polypeptide-associated complex protein.